Consider the following 236-residue polypeptide: Large ribosomal subunit protein uL2 (236 aa).

Residues 1 to 10 (MGHRITTQSR) are compositionally biased toward polar residues. Disordered stretches follow at residues 1–20 (MGHR…YRAP) and 202–236 (GGGG…TGRR). Positions 224–236 (KVGHIAARRTGRR) are enriched in basic residues.

The protein belongs to the universal ribosomal protein uL2 family. In terms of assembly, part of the 50S ribosomal subunit. Forms a bridge to the 30S subunit in the 70S ribosome.

Its function is as follows. One of the primary rRNA binding proteins. Required for association of the 30S and 50S subunits to form the 70S ribosome, for tRNA binding and peptide bond formation. It has been suggested to have peptidyltransferase activity; this is somewhat controversial. Makes several contacts with the 16S rRNA in the 70S ribosome. The protein is Large ribosomal subunit protein uL2 of Methanospirillum hungatei JF-1 (strain ATCC 27890 / DSM 864 / NBRC 100397 / JF-1).